We begin with the raw amino-acid sequence, 80 residues long: Protein CEBPZOS (80 aa).

Residues 15–32 (GVLVAELVGVFGAYFLFS) form a helical membrane-spanning segment.

Its subcellular location is the mitochondrion membrane. The chain is Protein CEBPZOS from Homo sapiens (Human).